The sequence spans 500 residues: Beta-glucosidase 28 (500 aa).

Residues 1–24 form the signal peptide; that stretch reads MDRRLLLSALLFIALACSSNRVHG. Q45 provides a ligand contact to a beta-D-glucoside. An N-linked (GlcNAc...) asparagine glycan is attached at N111. Residues H146 and 191 to 192 each bind a beta-D-glucoside; that span reads NE. The active-site Proton donor is E192. A disulfide bridge links C211 with C219. Position 337 (Y337) interacts with a beta-D-glucoside. An N-linked (GlcNAc...) asparagine glycan is attached at N362. E408 is a binding site for a beta-D-glucoside. Residue E408 is the Nucleophile of the active site. Residues N409, N415, and N416 are each glycosylated (N-linked (GlcNAc...) asparagine). A beta-D-glucoside is bound by residues W457, 464–465, and F473; that span reads EF.

The protein belongs to the glycosyl hydrolase 1 family.

It catalyses the reaction Hydrolysis of terminal, non-reducing beta-D-glucosyl residues with release of beta-D-glucose.. The polypeptide is Beta-glucosidase 28 (BGLU28) (Oryza sativa subsp. japonica (Rice)).